Consider the following 264-residue polypeptide: Thymidylate synthase (264 aa).

R21 is a binding site for dUMP. H51 contributes to the (6R)-5,10-methylene-5,6,7,8-tetrahydrofolate binding site. A dUMP-binding site is contributed by 126–127 (RR). C146 acts as the Nucleophile in catalysis. Residues 166 to 169 (RSAD), N177, and 207 to 209 (HLY) contribute to the dUMP site. D169 contacts (6R)-5,10-methylene-5,6,7,8-tetrahydrofolate. A263 is a (6R)-5,10-methylene-5,6,7,8-tetrahydrofolate binding site.

It belongs to the thymidylate synthase family. Bacterial-type ThyA subfamily. Homodimer.

The protein resides in the cytoplasm. The catalysed reaction is dUMP + (6R)-5,10-methylene-5,6,7,8-tetrahydrofolate = 7,8-dihydrofolate + dTMP. Its pathway is pyrimidine metabolism; dTTP biosynthesis. Catalyzes the reductive methylation of 2'-deoxyuridine-5'-monophosphate (dUMP) to 2'-deoxythymidine-5'-monophosphate (dTMP) while utilizing 5,10-methylenetetrahydrofolate (mTHF) as the methyl donor and reductant in the reaction, yielding dihydrofolate (DHF) as a by-product. This enzymatic reaction provides an intracellular de novo source of dTMP, an essential precursor for DNA biosynthesis. In Thiobacillus denitrificans (strain ATCC 25259 / T1), this protein is Thymidylate synthase.